The primary structure comprises 199 residues: Urease accessory protein UreG (199 aa).

8–15 (GPVGSGKT) serves as a coordination point for GTP.

The protein belongs to the SIMIBI class G3E GTPase family. UreG subfamily. In terms of assembly, homodimer. UreH, UreF and UreG form a complex that acts as a GTP-hydrolysis-dependent molecular chaperone, activating the urease apoprotein by helping to assemble the nickel containing metallocenter of UreC. The UreE protein probably delivers the nickel.

The protein localises to the cytoplasm. Its function is as follows. Facilitates the functional incorporation of the urease nickel metallocenter. This process requires GTP hydrolysis, probably effectuated by UreG. In Helicobacter pylori (strain G27), this protein is Urease accessory protein UreG.